The primary structure comprises 269 residues: Formamidopyrimidine-DNA glycosylase (269 aa).

The Schiff-base intermediate with DNA role is filled by Pro-2. Glu-3 acts as the Proton donor in catalysis. Residue Lys-57 is the Proton donor; for beta-elimination activity of the active site. DNA contacts are provided by His-90, Arg-109, and Lys-150. Residues Gln-235 to Lys-269 form an FPG-type zinc finger. Arg-259 (proton donor; for delta-elimination activity) is an active-site residue.

This sequence belongs to the FPG family. Monomer. Zn(2+) is required as a cofactor.

It catalyses the reaction Hydrolysis of DNA containing ring-opened 7-methylguanine residues, releasing 2,6-diamino-4-hydroxy-5-(N-methyl)formamidopyrimidine.. It carries out the reaction 2'-deoxyribonucleotide-(2'-deoxyribose 5'-phosphate)-2'-deoxyribonucleotide-DNA = a 3'-end 2'-deoxyribonucleotide-(2,3-dehydro-2,3-deoxyribose 5'-phosphate)-DNA + a 5'-end 5'-phospho-2'-deoxyribonucleoside-DNA + H(+). Functionally, involved in base excision repair of DNA damaged by oxidation or by mutagenic agents. Acts as a DNA glycosylase that recognizes and removes damaged bases. Has a preference for oxidized purines, such as 7,8-dihydro-8-oxoguanine (8-oxoG). Has AP (apurinic/apyrimidinic) lyase activity and introduces nicks in the DNA strand. Cleaves the DNA backbone by beta-delta elimination to generate a single-strand break at the site of the removed base with both 3'- and 5'-phosphates. This is Formamidopyrimidine-DNA glycosylase from Shigella dysenteriae serotype 1 (strain Sd197).